Here is a 109-residue protein sequence, read N- to C-terminus: MAKDIGLDIPEPTKECDDINCPFHGELPVRGQIHVGTVVSAKMDRTVVIQQRREKLINKYQRYEKRQSKIHAHNPPCIDAKVGDIVTIAECRPLSKTKSYVVVKAEVKA.

The protein belongs to the universal ribosomal protein uS17 family. As to quaternary structure, part of the 30S ribosomal subunit.

Functionally, one of the primary rRNA binding proteins, it binds specifically to the 5'-end of 16S ribosomal RNA. This is Small ribosomal subunit protein uS17 from Methanococcoides burtonii (strain DSM 6242 / NBRC 107633 / OCM 468 / ACE-M).